We begin with the raw amino-acid sequence, 67 residues long: Large ribosomal subunit protein uL29 (67 aa).

This sequence belongs to the universal ribosomal protein uL29 family.

The chain is Large ribosomal subunit protein uL29 from Ruminiclostridium cellulolyticum (strain ATCC 35319 / DSM 5812 / JCM 6584 / H10) (Clostridium cellulolyticum).